We begin with the raw amino-acid sequence, 203 residues long: Tic20 family protein Ycf60 (203 aa).

5 helical membrane passes run 2 to 22, 51 to 71, 84 to 104, 131 to 151, and 153 to 173; these read IRLF…RLAI, IIPY…YVLP, ILLP…VTFF, ILLF…PIEF, and ISFI…STIT.

This sequence belongs to the Tic20 family.

The protein localises to the plastid. It is found in the chloroplast membrane. The polypeptide is Tic20 family protein Ycf60 (ycf60) (Porphyra purpurea (Red seaweed)).